Here is a 370-residue protein sequence, read N- to C-terminus: Anthranilate phosphoribosyltransferase (370 aa).

5-phospho-alpha-D-ribose 1-diphosphate is bound by residues Gly82, 85-86 (GD), Thr90, 92-95 (NVST), 110-118 (KHGNRAATS), and Ser122. Gly82 lines the anthranilate pocket. A Mg(2+)-binding site is contributed by Ser94. Asn113 provides a ligand contact to anthranilate. Arg168 contacts anthranilate. Residues Asp226 and Glu227 each coordinate Mg(2+).

Belongs to the anthranilate phosphoribosyltransferase family. Homodimer. Requires Mg(2+) as cofactor.

The enzyme catalyses N-(5-phospho-beta-D-ribosyl)anthranilate + diphosphate = 5-phospho-alpha-D-ribose 1-diphosphate + anthranilate. It participates in amino-acid biosynthesis; L-tryptophan biosynthesis; L-tryptophan from chorismate: step 2/5. In terms of biological role, catalyzes the transfer of the phosphoribosyl group of 5-phosphorylribose-1-pyrophosphate (PRPP) to anthranilate to yield N-(5'-phosphoribosyl)-anthranilate (PRA). The protein is Anthranilate phosphoribosyltransferase of Methanosarcina acetivorans (strain ATCC 35395 / DSM 2834 / JCM 12185 / C2A).